A 264-amino-acid polypeptide reads, in one-letter code: Phosphonates import ATP-binding protein PhnC (264 aa).

One can recognise an ABC transporter domain in the interval 7-254; the sequence is LSIRAASKTF…KLIDIYGPEF (248 aa). 39–46 is an ATP binding site; it reads GPSGSGKS.

Belongs to the ABC transporter superfamily. Phosphonates importer (TC 3.A.1.9.1) family. In terms of assembly, the complex is composed of two ATP-binding proteins (PhnC), two transmembrane proteins (PhnE) and a solute-binding protein (PhnD).

It localises to the cell inner membrane. The catalysed reaction is phosphonate(out) + ATP + H2O = phosphonate(in) + ADP + phosphate + H(+). Its function is as follows. Part of the ABC transporter complex PhnCDE involved in phosphonates import. Responsible for energy coupling to the transport system. The sequence is that of Phosphonates import ATP-binding protein PhnC from Caulobacter vibrioides (strain ATCC 19089 / CIP 103742 / CB 15) (Caulobacter crescentus).